A 354-amino-acid chain; its full sequence is Protein RecA (354 aa).

ATP is bound at residue 67 to 74 (GPESSGKT).

Belongs to the RecA family.

The protein resides in the cytoplasm. Its function is as follows. Can catalyze the hydrolysis of ATP in the presence of single-stranded DNA, the ATP-dependent uptake of single-stranded DNA by duplex DNA, and the ATP-dependent hybridization of homologous single-stranded DNAs. It interacts with LexA causing its activation and leading to its autocatalytic cleavage. The sequence is that of Protein RecA from Haemophilus influenzae (strain 86-028NP).